We begin with the raw amino-acid sequence, 262 residues long: tRNA pseudouridine synthase A (262 aa).

Residue aspartate 51 is the Nucleophile of the active site. Tyrosine 109 contacts substrate.

Belongs to the tRNA pseudouridine synthase TruA family. As to quaternary structure, homodimer.

It catalyses the reaction uridine(38/39/40) in tRNA = pseudouridine(38/39/40) in tRNA. In terms of biological role, formation of pseudouridine at positions 38, 39 and 40 in the anticodon stem and loop of transfer RNAs. This Aliivibrio salmonicida (strain LFI1238) (Vibrio salmonicida (strain LFI1238)) protein is tRNA pseudouridine synthase A.